A 366-amino-acid chain; its full sequence is Holliday junction branch migration complex subunit RuvB (366 aa).

The interval 3–183 is large ATPase domain (RuvB-L); it reads ADGLVSAAAS…FGFTAHLDFY (181 aa). Residues Leu22, Arg23, Gly64, Lys67, Thr68, Ser69, 130-132, Arg173, Tyr183, and Arg220 each bind ATP; that span reads EDF. Residue Thr68 participates in Mg(2+) binding. Residues 184–254 are small ATPAse domain (RuvB-S); sequence APDELARVLT…VARAALRIYD (71 aa). The interval 257–366 is head domain (RuvB-H); sequence GLGLDRLDRA…PEDGLHPGGG (110 aa). Residues Arg312 and Arg317 each coordinate DNA.

Belongs to the RuvB family. Homohexamer. Forms an RuvA(8)-RuvB(12)-Holliday junction (HJ) complex. HJ DNA is sandwiched between 2 RuvA tetramers; dsDNA enters through RuvA and exits via RuvB. An RuvB hexamer assembles on each DNA strand where it exits the tetramer. Each RuvB hexamer is contacted by two RuvA subunits (via domain III) on 2 adjacent RuvB subunits; this complex drives branch migration. In the full resolvosome a probable DNA-RuvA(4)-RuvB(12)-RuvC(2) complex forms which resolves the HJ.

It localises to the cytoplasm. The enzyme catalyses ATP + H2O = ADP + phosphate + H(+). Its function is as follows. The RuvA-RuvB-RuvC complex processes Holliday junction (HJ) DNA during genetic recombination and DNA repair, while the RuvA-RuvB complex plays an important role in the rescue of blocked DNA replication forks via replication fork reversal (RFR). RuvA specifically binds to HJ cruciform DNA, conferring on it an open structure. The RuvB hexamer acts as an ATP-dependent pump, pulling dsDNA into and through the RuvAB complex. RuvB forms 2 homohexamers on either side of HJ DNA bound by 1 or 2 RuvA tetramers; 4 subunits per hexamer contact DNA at a time. Coordinated motions by a converter formed by DNA-disengaged RuvB subunits stimulates ATP hydrolysis and nucleotide exchange. Immobilization of the converter enables RuvB to convert the ATP-contained energy into a lever motion, pulling 2 nucleotides of DNA out of the RuvA tetramer per ATP hydrolyzed, thus driving DNA branch migration. The RuvB motors rotate together with the DNA substrate, which together with the progressing nucleotide cycle form the mechanistic basis for DNA recombination by continuous HJ branch migration. Branch migration allows RuvC to scan DNA until it finds its consensus sequence, where it cleaves and resolves cruciform DNA. The sequence is that of Holliday junction branch migration complex subunit RuvB from Frankia alni (strain DSM 45986 / CECT 9034 / ACN14a).